An 865-amino-acid chain; its full sequence is DNA mismatch repair protein MutS (865 aa).

609–616 lines the ATP pocket; that stretch reads GPNMAGKS.

This sequence belongs to the DNA mismatch repair MutS family.

This protein is involved in the repair of mismatches in DNA. It is possible that it carries out the mismatch recognition step. This protein has a weak ATPase activity. This Leuconostoc citreum (strain KM20) protein is DNA mismatch repair protein MutS.